Consider the following 408-residue polypeptide: Putative transporter AmpG 2 (408 aa).

12 helical membrane-spanning segments follow: residues 11-31 (IFNI…YLLT), 49-69 (IGLF…GPLL), 84-104 (YCLV…TSFN), 110-130 (TPFV…DMLI), 154-174 (FRIG…IISW), 177-197 (VYRT…FYPL), 224-244 (WIVI…LSIM), 261-281 (IGYK…GGFL), 294-311 (VLIY…LYFL), 315-337 (IISL…SPFF), 353-373 (IALI…ISGY), and 382-402 (YFFI…LYLP).

Belongs to the major facilitator superfamily.

The protein resides in the cell inner membrane. This Rickettsia typhi (strain ATCC VR-144 / Wilmington) protein is Putative transporter AmpG 2 (ampG2).